The chain runs to 241 residues: Tetraspanin-1 (241 aa).

At 1–11 the chain is on the cytoplasmic side; that stretch reads MGCFNFIKVMM. Residues 12–32 form a helical membrane-spanning segment; that stretch reads ILFNMLIFLCGAALLAVGIWV. Topologically, residues 33–52 are extracellular; the sequence is SVDGPSFVKIFGPMSSSAMQ. Residues 53–73 traverse the membrane as a helical segment; it reads FVNVGYFLIAAGAVLFALGFL. Over 74–88 the chain is Cytoplasmic; it reads GCYGAQTESKCALMT. The chain crosses the membrane as a helical span at residues 89-109; the sequence is FFFILLLIFIAEVAAAVVALV. The Extracellular portion of the chain corresponds to 110 to 211; it reads YTTLAENFLT…KQLLYDIRTN (102 aa). N-linked (GlcNAc...) asparagine glycosylation is found at Asn-141, Asn-154, Asn-167, Asn-180, Asn-189, and Asn-194. The helical transmembrane segment at 212 to 232 threads the bilayer; it reads AVTVGGVAAGIGGLELAAMIV. The Cytoplasmic segment spans residues 233-241; it reads SMYLYCNLE.

Belongs to the tetraspanin (TM4SF) family. As to quaternary structure, interacts with SLC19A2. Interacts with NTRK1/TRKA.

The protein resides in the lysosome membrane. Functionally, structural component of specialized membrane microdomains known as tetraspanin-enriched microdomains (TERMs), which act as platforms for receptor clustering and signaling. Participates thereby in diverse biological functions such as cell signal transduction, adhesion, migration and protein trafficking. Regulates neuronal differentiation in response to NGF by facilitating NGF-mediated activation of NTRK1/TRKA receptor tyrosine kinase and subsequent downstream signaling pathways. Plays a role in the inhibition of TNFalpha-induced apoptosis. Mechanistically, inhibits the NF-kappa-B signaling pathway by blocking phosphorylation of CHUK. Also promotes the stability of the thiamine transporter 1/SLC19A2 in intestinal epithelial cells leading to an increase of thiamine uptake process. The polypeptide is Tetraspanin-1 (TSPAN1) (Bos taurus (Bovine)).